Reading from the N-terminus, the 346-residue chain is Ornithine carbamoyltransferase, catabolic (346 aa).

Residues 58–61 (STRT), Asn-85, Arg-109, and 136–139 (HPTQ) contribute to the carbamoyl phosphate site. Residues Asn-168, Asp-239, and 243 to 244 (SL) contribute to the L-ornithine site. Carbamoyl phosphate-binding positions include 280 to 281 (CL) and Arg-332.

This sequence belongs to the aspartate/ornithine carbamoyltransferase superfamily. OTCase family.

Its subcellular location is the cytoplasm. It carries out the reaction carbamoyl phosphate + L-ornithine = L-citrulline + phosphate + H(+). The protein operates within amino-acid degradation; L-arginine degradation via ADI pathway; carbamoyl phosphate from L-arginine: step 2/2. In terms of biological role, reversibly catalyzes the transfer of the carbamoyl group from carbamoyl phosphate (CP) to the N(epsilon) atom of ornithine (ORN) to produce L-citrulline. The chain is Ornithine carbamoyltransferase, catabolic from Mycoplasma pneumoniae (strain ATCC 29342 / M129 / Subtype 1) (Mycoplasmoides pneumoniae).